We begin with the raw amino-acid sequence, 298 residues long: Tyrosine recombinase XerC (298 aa).

The 84-residue stretch at 1–84 folds into the Core-binding (CB) domain; sequence MNHIQEAFLN…TLRTFYEYWM (84 aa). A Tyr recombinase domain is found at 105-286; it reads YLPQFFYEEE…SNQQLRKVYL (182 aa). Residues R145, K169, H238, R241, and H264 contribute to the active site. The active-site O-(3'-phospho-DNA)-tyrosine intermediate is Y273.

It belongs to the 'phage' integrase family. XerC subfamily. In terms of assembly, forms a cyclic heterotetrameric complex composed of two molecules of XerC and two molecules of XerD.

Its subcellular location is the cytoplasm. Functionally, site-specific tyrosine recombinase, which acts by catalyzing the cutting and rejoining of the recombining DNA molecules. The XerC-XerD complex is essential to convert dimers of the bacterial chromosome into monomers to permit their segregation at cell division. It also contributes to the segregational stability of plasmids. The polypeptide is Tyrosine recombinase XerC (Staphylococcus aureus (strain Mu3 / ATCC 700698)).